The primary structure comprises 418 residues: Gamma-glutamyl phosphate reductase (418 aa).

Positions 1–18 (MAIQDEMRQVAEGAREAS) are enriched in basic and acidic residues. The segment at 1–22 (MAIQDEMRQVAEGAREASRTLS) is disordered.

Belongs to the gamma-glutamyl phosphate reductase family.

It localises to the cytoplasm. It catalyses the reaction L-glutamate 5-semialdehyde + phosphate + NADP(+) = L-glutamyl 5-phosphate + NADPH + H(+). The protein operates within amino-acid biosynthesis; L-proline biosynthesis; L-glutamate 5-semialdehyde from L-glutamate: step 2/2. In terms of biological role, catalyzes the NADPH-dependent reduction of L-glutamate 5-phosphate into L-glutamate 5-semialdehyde and phosphate. The product spontaneously undergoes cyclization to form 1-pyrroline-5-carboxylate. The polypeptide is Gamma-glutamyl phosphate reductase (Syntrophus aciditrophicus (strain SB)).